Reading from the N-terminus, the 357-residue chain is MNDNPAVNKVFNEISSLYKQYFEYAIKVRKWLEIPDDLSHREIGYGMLKKVDNRNMSFNTDGEYLTWVLKESPFHLYKSLSYMEYPDVVGGAAKKGLFKREVAFDIDTHKTEKCTHDDSWICEECLGEARNQVLILIEDFLFPDFGLSEKDLKIVFTGNRGYHIYLKPENPELLKKIEKWGKNERRYFIEYILGKNLNLRNMGSRWKNILIREFKKNKIATKKFEKTSDWKTEIDTRKDTTRRTIYETIGKVKSRLELDEKVMDDDIRLLRTIGSLHGYTGLMVKEITYSSLKNNQFDPLNHGVFSKFHKIMYKVNIKQEIDPLTLKGDTFDHKSTEIPASYLLFLFGHGIDFEILE.

Residues D105, D107, and D259 contribute to the active site.

The protein belongs to the eukaryotic-type primase small subunit family. Heterodimer of a small subunit (PriS) and a large subunit (PriL). Mg(2+) serves as cofactor. Mn(2+) is required as a cofactor.

Functionally, catalytic subunit of DNA primase, an RNA polymerase that catalyzes the synthesis of short RNA molecules used as primers for DNA polymerase during DNA replication. The small subunit contains the primase catalytic core and has DNA synthesis activity on its own. Binding to the large subunit stabilizes and modulates the activity, increasing the rate of DNA synthesis while decreasing the length of the DNA fragments, and conferring RNA synthesis capability. The DNA polymerase activity may enable DNA primase to also catalyze primer extension after primer synthesis. May also play a role in DNA repair. The sequence is that of DNA primase small subunit PriS from Methanococcus maripaludis (strain C6 / ATCC BAA-1332).